We begin with the raw amino-acid sequence, 555 residues long: Wee1-like protein kinase 2 (555 aa).

Residues Met-1 to Gly-112 form a disordered region. A Phosphoserine; by CaMK2 and PKA modification is found at Ser-15. Residues Glu-26–Lys-41 show a composition bias toward polar residues. Residues Thr-57 to Pro-72 show a composition bias toward basic and acidic residues. Ser-71 carries the post-translational modification Phosphoserine. The span at Thr-102–Gly-112 shows a compositional bias: polar residues. The Nuclear localization signal motif lies at Lys-167–Lys-169. Residues Phe-208–Leu-485 form the Protein kinase domain. ATP-binding positions include Ile-214–Val-222 and Lys-237. The Nuclear export signal motif lies at Lys-310–Tyr-324. Asp-334 acts as the Proton acceptor in catalysis. Residues Asn-339 and Asp-375 each coordinate Mg(2+). Residues Thr-488–His-514 are a coiled coil.

The protein belongs to the protein kinase superfamily. Ser/Thr protein kinase family. WEE1 subfamily. Post-translationally, phosphorylated by PKA at Ser-15 in vitro, leading to activate kinase activity. Phosphorylation at Ser-15 by CaMK2, leading to increase its activity and promote metaphase II exit during egg activation. In terms of tissue distribution, ovary-specific.

It is found in the cytoplasm. The protein localises to the nucleus. It catalyses the reaction L-tyrosyl-[protein] + ATP = O-phospho-L-tyrosyl-[protein] + ADP + H(+). In terms of biological role, oocyte-specific protein tyrosine kinase that phosphorylates and inhibits CDK1 and acts as a key regulator of meiosis during both prophase I and metaphase II. Required to maintain meiotic arrest in oocytes during the germinal vesicle (GV) stage, a long period of quiescence at dictyate prophase I, by phosphorylating CDK1 at 'Tyr-15', leading to inhibit CDK1 activity and prevent meiotic reentry. Also required for metaphase II exit during egg activation by phosphorylating CDK1 at 'Tyr-15', to ensure exit from meiosis in oocytes and promote pronuclear formation. The polypeptide is Wee1-like protein kinase 2 (Wee2) (Mus musculus (Mouse)).